We begin with the raw amino-acid sequence, 605 residues long: Protein DENND6A (605 aa).

The disordered stretch occupies residues 1–20 (MALPGPAVFGPGSRGSLDEA). Residues 60-239 (HCVCVVGFDL…KVRIPTCHDK (180 aa)) enclose the uDENN domain. Ser-124 bears the Phosphoserine mark. The cDENN domain occupies 265 to 390 (EVDLFRCFCP…VKVKKLKNLK (126 aa)). Residues 392-525 (LDSKPGVYTS…KTRRKEMTQK (134 aa)) form the dDENN domain. The residue at position 507 (Lys-507) is an N6-methyllysine.

It belongs to the DENND6 family.

Its subcellular location is the recycling endosome. The protein localises to the cytoplasm. In terms of biological role, guanine nucleotide exchange factor (GEF) for RAB14. Component of an endocytic recycling pathway that is required for the control of ADAM10 transport, shedding of N-cadherin/CDH2 by ADAM9 or ADAM10 and regulation of cell-cell junctions. Required for RAB14 recruitment to recycling endosomes. The protein is Protein DENND6A (Dennd6a) of Mus musculus (Mouse).